Reading from the N-terminus, the 188-residue chain is Elongation factor P (188 aa).

This sequence belongs to the elongation factor P family.

The protein localises to the cytoplasm. The protein operates within protein biosynthesis; polypeptide chain elongation. In terms of biological role, involved in peptide bond synthesis. Stimulates efficient translation and peptide-bond synthesis on native or reconstituted 70S ribosomes in vitro. Probably functions indirectly by altering the affinity of the ribosome for aminoacyl-tRNA, thus increasing their reactivity as acceptors for peptidyl transferase. The chain is Elongation factor P from Rickettsia rickettsii (strain Iowa).